The following is an 86-amino-acid chain: UPF0297 protein LSL_1110 (86 aa).

This sequence belongs to the UPF0297 family.

The polypeptide is UPF0297 protein LSL_1110 (Ligilactobacillus salivarius (strain UCC118) (Lactobacillus salivarius)).